The following is a 505-amino-acid chain: Histidine--tRNA ligase (505 aa).

The protein belongs to the class-II aminoacyl-tRNA synthetase family. As to quaternary structure, homodimer.

Its subcellular location is the cytoplasm. It carries out the reaction tRNA(His) + L-histidine + ATP = L-histidyl-tRNA(His) + AMP + diphosphate + H(+). This is Histidine--tRNA ligase from Jannaschia sp. (strain CCS1).